The sequence spans 448 residues: Probable glycine dehydrogenase (decarboxylating) subunit 1 (448 aa).

It belongs to the GcvP family. N-terminal subunit subfamily. As to quaternary structure, the glycine cleavage system is composed of four proteins: P, T, L and H. In this organism, the P 'protein' is a heterodimer of two subunits.

It carries out the reaction N(6)-[(R)-lipoyl]-L-lysyl-[glycine-cleavage complex H protein] + glycine + H(+) = N(6)-[(R)-S(8)-aminomethyldihydrolipoyl]-L-lysyl-[glycine-cleavage complex H protein] + CO2. The glycine cleavage system catalyzes the degradation of glycine. The P protein binds the alpha-amino group of glycine through its pyridoxal phosphate cofactor; CO(2) is released and the remaining methylamine moiety is then transferred to the lipoamide cofactor of the H protein. This is Probable glycine dehydrogenase (decarboxylating) subunit 1 from Staphylococcus aureus (strain Mu3 / ATCC 700698).